A 187-amino-acid chain; its full sequence is High-affinity copper transporter ctrA2 (187 aa).

The next 2 membrane-spanning stretches (helical) occupy residues 44 to 64 (YAGT…LVAF) and 137 to 157 (AAIF…VMTM).

Belongs to the copper transporter (Ctr) (TC 1.A.56) family. SLC31A subfamily.

It is found in the cell membrane. The catalysed reaction is Cu(2+)(in) = Cu(2+)(out). Its function is as follows. High-affinity copper transporter of plasma membrane that mediates copper uptake under low copper conditions. The mechanism driving the transmembrane transport of copper has still to be determined. Acts as a potential virulence factor. This is High-affinity copper transporter ctrA2 from Aspergillus fumigatus (strain ATCC MYA-4609 / CBS 101355 / FGSC A1100 / Af293) (Neosartorya fumigata).